The primary structure comprises 145 residues: uncharacterized protein (145 aa).

A helical transmembrane segment spans residues 104–124 (IEVIILSHHFVIGFSFLLGLL).

The protein localises to the membrane. This is an uncharacterized protein from Saccharomyces cerevisiae (strain ATCC 204508 / S288c) (Baker's yeast).